Consider the following 509-residue polypeptide: Activin receptor type-1 (509 aa).

The signal sequence occupies residues Met-1 to Ser-20. Residues Met-21–Glu-123 are Extracellular-facing. Asn-102 is a glycosylation site (N-linked (GlcNAc...) asparagine). A helical membrane pass occupies residues Val-124–Leu-146. The Cytoplasmic portion of the chain corresponds to Arg-147–Cys-509. The GS domain occupies Ser-178 to Gln-207. In terms of domain architecture, Protein kinase spans Ile-208 to Leu-502. ATP-binding positions include Val-214 to Val-222 and Lys-235. The active-site Proton acceptor is the Asp-336. Phosphoserine is present on Ser-501.

It belongs to the protein kinase superfamily. TKL Ser/Thr protein kinase family. TGFB receptor subfamily. In terms of assembly, interacts with FKBP1A. Interacts with FCHO1. Interacts with CLU. Interacts with type II receptors AMHR2 and ACVR2A. Interacts with BMP7. Interacts with GDF2/BMP9. Interacts with BMP6 (when glycosylated); the interaction may induce HAMP expression. Interacts with TSC22D1/TSC-22. Requires Mg(2+) as cofactor. It depends on Mn(2+) as a cofactor. As to expression, urogenital ridge, testis, ovary, brain and lungs.

It is found in the membrane. It catalyses the reaction L-threonyl-[receptor-protein] + ATP = O-phospho-L-threonyl-[receptor-protein] + ADP + H(+). The enzyme catalyses L-seryl-[receptor-protein] + ATP = O-phospho-L-seryl-[receptor-protein] + ADP + H(+). Its function is as follows. Bone morphogenetic protein (BMP) type I receptor that is involved in a wide variety of biological processes, including bone, heart, cartilage, nervous, and reproductive system development and regulation. As a type I receptor, forms heterotetrameric receptor complexes with the type II receptors AMHR2, ACVR2A ors ACVR2B. Upon binding of ligands such as BMP7 or GDF2/BMP9 to the heteromeric complexes, type II receptors transphosphorylate ACVR1 intracellular domain. In turn, ACVR1 kinase domain is activated and subsequently phosphorylates SMAD1/5/8 proteins that transduce the signal. In addition to its role in mediating BMP pathway-specific signaling, suppresses TGFbeta/activin pathway signaling by interfering with the binding of activin to its type II receptor. Besides canonical SMAD signaling, can activate non-canonical pathways such as p38 mitogen-activated protein kinases/MAPKs. May promote the expression of HAMP, potentially via its interaction with BMP6. The sequence is that of Activin receptor type-1 (Acvr1) from Rattus norvegicus (Rat).